The chain runs to 383 residues: ATP phosphoribosyltransferase regulatory subunit (383 aa).

The protein belongs to the class-II aminoacyl-tRNA synthetase family. HisZ subfamily. Heteromultimer composed of HisG and HisZ subunits.

Its subcellular location is the cytoplasm. It functions in the pathway amino-acid biosynthesis; L-histidine biosynthesis; L-histidine from 5-phospho-alpha-D-ribose 1-diphosphate: step 1/9. Functionally, required for the first step of histidine biosynthesis. May allow the feedback regulation of ATP phosphoribosyltransferase activity by histidine. In Paraburkholderia phytofirmans (strain DSM 17436 / LMG 22146 / PsJN) (Burkholderia phytofirmans), this protein is ATP phosphoribosyltransferase regulatory subunit.